A 177-amino-acid polypeptide reads, in one-letter code: Early nodulin-like protein 15 (177 aa).

Positions methionine 1–alanine 24 are cleaved as a signal peptide. The 105-residue stretch at asparagine 25–threonine 129 folds into the Phytocyanin domain. A disulfide bridge connects residues cysteine 83 and cysteine 117. N-linked (GlcNAc...) asparagine glycosylation is present at asparagine 84. A lipid anchor (GPI-anchor amidated serine) is attached at serine 153. A propeptide spans glycine 154–phenylalanine 177 (removed in mature form).

It belongs to the early nodulin-like (ENODL) family. In terms of tissue distribution, mostly expressed in seedlings, siliques and flowers, and, to a lower extent, in roots, stems and seeds, but barely in leaves.

The protein localises to the cell membrane. In terms of biological role, may act as a carbohydrate transporter. Required, together with ENODL11, ENODL12, ENODL13, ENODL14 and ENODL15, for male-female communication and pollen tube reception and burst at the synergid cell surface of the female gametophyte. This chain is Early nodulin-like protein 15, found in Arabidopsis thaliana (Mouse-ear cress).